The primary structure comprises 663 residues: MGTSVSNPTAILQTMQGFLRKWWSEFNLQTRLMAAATLVVSLLMSGLTFWAVNTIQEDAQLVDTRFGRDVGLLLAANVAPMIADKNLTEVARFSSRFYENTSNIRYMIYADPSGKIFFGIPYSEETVQNSLTLERRIELPQIDPHNFDQPFVRQHHTPNGDVTDVFIPLQYQGKFLGVLAIGINPNPAAVNSSNLTRDVTIAVFISIWVMVILGAVFNALTITQPIKELLLGVKNIAAGNFKQRITLPFGGELGELIVNFNEMAERLERYEAQNIEELTAEKAKLDTLVSTIADGAMLVDTNLQLLLVNPTARRLFAWENKPIIGENLLENLPPEITAQLTQPLRELAADQGSLLFSPGHGPQEEEQDKTYAPEEFRISLTQPFPRTIRLMLTQVLDQNRENLRGIVMTVQDITREVELNEAKSQFISNVSHELRTPLFNIKSFIETLSEFGEDLSEVERKEFLETANHETDRLSRLVNDVLDLSKLESSKIYQLDAVDLYQLIEQSLRSYQLNAKDKQLQLEKILDPDLPFALGNYDLLLQVMTNLIGNSFKFTKAGGKIIVRAYPLHRSNLRAEDGPGLVRVEISDTGIGIDPEDQAAIFERFYRVENRVHTLEGTGLGLSIVKNIIAKHQSQIHLVSEVGVGTTFWFDLAVYQSMLMVVG.

3 helical membrane passes run 32-52 (LMAAATLVVSLLMSGLTFWAV), 165-185 (VFIPLQYQGKFLGVLAIGINP), and 199-219 (VTIAVFISIWVMVILGAVFNA). The 53-residue stretch at 220–272 (LTITQPIKELLLGVKNIAAGNFKQRITLPFGGELGELIVNFNEMAERLERYEA) folds into the HAMP domain. The 71-residue stretch at 281–351 (EKAKLDTLVS…QPLRELAADQ (71 aa)) folds into the PAS domain. The Histidine kinase domain occupies 429 to 656 (NVSHELRTPL…TFWFDLAVYQ (228 aa)). H432 carries the post-translational modification Phosphohistidine; by autocatalysis.

The protein resides in the cell membrane. It catalyses the reaction ATP + protein L-histidine = ADP + protein N-phospho-L-histidine.. The polypeptide is Drug sensory protein A (dspA) (Synechocystis sp. (strain ATCC 27184 / PCC 6803 / Kazusa)).